A 242-amino-acid polypeptide reads, in one-letter code: Succinyl-CoA:3-ketoacid coenzyme A transferase subunit A (242 aa).

A CoA-binding site is contributed by 33-39; it reads GGFGLCG.

It belongs to the 3-oxoacid CoA-transferase subunit A family. Heterodimer of a subunit A and a subunit B.

The catalysed reaction is a 3-oxo acid + succinyl-CoA = a 3-oxoacyl-CoA + succinate. Its pathway is bacterial outer membrane biogenesis; lipopolysaccharide biosynthesis. In Xanthomonas campestris pv. campestris (strain B100), this protein is Succinyl-CoA:3-ketoacid coenzyme A transferase subunit A (lpsI).